The following is a 523-amino-acid chain: Glucose-1-phosphate adenylyltransferase large subunit 1, chloroplastic/amyloplastic (523 aa).

Residues 1 to 49 (MSSMQFSSVLPLEGKACVSPVRREGSACERLKIGDSSSIRHERASRRMC) constitute a chloroplast transit peptide.

It belongs to the bacterial/plant glucose-1-phosphate adenylyltransferase family. As to quaternary structure, heterotetramer. In terms of tissue distribution, starchy endosperm and roots.

It localises to the plastid. The protein localises to the chloroplast. It is found in the amyloplast. It carries out the reaction alpha-D-glucose 1-phosphate + ATP + H(+) = ADP-alpha-D-glucose + diphosphate. The protein operates within glycan biosynthesis; starch biosynthesis. Its activity is regulated as follows. Highly active without 3'phosphoglycerate, and is only slightly affected by the activator 3'phosphoglycerate and inhibitor orthophosphate. This protein plays a role in synthesis of starch. It catalyzes the synthesis of the activated glycosyl donor, ADP-glucose from Glc-1-P and ATP. This chain is Glucose-1-phosphate adenylyltransferase large subunit 1, chloroplastic/amyloplastic, found in Hordeum vulgare (Barley).